The following is a 458-amino-acid chain: ATP synthase subunit beta (458 aa).

148–155 (GGAGVGKT) contacts ATP.

The protein belongs to the ATPase alpha/beta chains family. F-type ATPases have 2 components, CF(1) - the catalytic core - and CF(0) - the membrane proton channel. CF(1) has five subunits: alpha(3), beta(3), gamma(1), delta(1), epsilon(1). CF(0) has three main subunits: a(1), b(2) and c(9-12). The alpha and beta chains form an alternating ring which encloses part of the gamma chain. CF(1) is attached to CF(0) by a central stalk formed by the gamma and epsilon chains, while a peripheral stalk is formed by the delta and b chains.

The protein localises to the cell inner membrane. The catalysed reaction is ATP + H2O + 4 H(+)(in) = ADP + phosphate + 5 H(+)(out). Produces ATP from ADP in the presence of a proton gradient across the membrane. The catalytic sites are hosted primarily by the beta subunits. This chain is ATP synthase subunit beta, found in Ectopseudomonas mendocina (strain ymp) (Pseudomonas mendocina).